The chain runs to 761 residues: Zinc finger protein 287 (761 aa).

Positions 49–131 (RQNFRNFPYP…TLVEDLTQIL (83 aa)) constitute an SCAN box domain. The disordered stretch occupies residues 134-154 (EAPQNSTLSQDTPEEDPRGKH). A KRAB domain is found at 170–238 (MTFKDVAVDI…IKEILEGPSP (69 aa)). 14 C2H2-type zinc fingers span residues 368 to 390 (YKCN…QSTH), 396 to 418 (YECE…QRMH), 424 to 446 (YECH…QRIH), 452 to 474 (YKCD…QRTH), 480 to 502 (YKCL…QRVH), 508 to 530 (YICN…QKIH), 536 to 558 (YKCN…QRIH), 564 to 586 (YKCN…QTTH), 592 to 614 (YICN…HRTH), 620 to 642 (YKCS…QRIH), 648 to 670 (FKCN…QRIH), 676 to 698 (YKCN…QRTH), 704 to 726 (YKCN…QRIH), and 732 to 754 (YACR…QRVH).

The protein belongs to the krueppel C2H2-type zinc-finger protein family.

It is found in the nucleus. Functionally, may be involved in transcriptional regulation. This is Zinc finger protein 287 from Pongo pygmaeus (Bornean orangutan).